Reading from the N-terminus, the 358-residue chain is Thiol protease aleurain-like (358 aa).

The first 21 residues, 1 to 21, serve as a signal peptide directing secretion; sequence MSVKLNLSSSILLILFAAAAS. The propeptide at 22-140 is activation peptide; sequence KEIGFDESNP…KGSHKITEAT (119 aa). A glycan (N-linked (GlcNAc...) asparagine) is linked at Asn125. 2 disulfides stabilise this stretch: Cys162-Cys205 and Cys196-Cys238. Cys165 is a catalytic residue. N-linked (GlcNAc...) asparagine glycosylation occurs at Asn254. An intrachain disulfide couples Cys296 to Cys346. Residues His305 and Asn325 contribute to the active site.

It belongs to the peptidase C1 family.

The protein resides in the vacuole. It catalyses the reaction Hydrolysis of proteins, acting as an aminopeptidase (notably, cleaving Arg-|-Xaa bonds) as well as an endopeptidase.. Its function is as follows. May play a role in proteolysis leading to mobilization of nitrogen during senescence and starvation. The protein is Thiol protease aleurain-like of Arabidopsis thaliana (Mouse-ear cress).